Here is a 273-residue protein sequence, read N- to C-terminus: Phosphate import ATP-binding protein PstB (273 aa).

A disordered region spans residues 1-20; sequence MTTVSTAAASGPAVPPPRID. An ABC transporter domain is found at 27–268; sequence VAARNLNFYY…PSDRRTQDYI (242 aa). ATP is bound at residue 59 to 66; that stretch reads GPSGCGKS.

Belongs to the ABC transporter superfamily. Phosphate importer (TC 3.A.1.7) family. The complex is composed of two ATP-binding proteins (PstB), two transmembrane proteins (PstC and PstA) and a solute-binding protein (PstS).

The protein localises to the cell inner membrane. The enzyme catalyses phosphate(out) + ATP + H2O = ADP + 2 phosphate(in) + H(+). Part of the ABC transporter complex PstSACB involved in phosphate import. Responsible for energy coupling to the transport system. The sequence is that of Phosphate import ATP-binding protein PstB from Nitrobacter winogradskyi (strain ATCC 25391 / DSM 10237 / CIP 104748 / NCIMB 11846 / Nb-255).